Here is a 28-residue protein sequence, read N- to C-terminus: Kappa-buthitoxin-Tt2b (28 aa).

3 disulfide bridges follow: C2/C24, C7/C20, and C11/C26.

In terms of tissue distribution, expressed by the venom gland.

The protein resides in the secreted. Blocks potassium channels Shaker-IR (with inactivation domain removed) and hKv1.2/KCNA2. This is Kappa-buthitoxin-Tt2b from Tityus trivittatus (Argentinean scorpion).